A 269-amino-acid chain; its full sequence is Type II restriction enzyme SfiI (269 aa).

The enzyme catalyses Endonucleolytic cleavage of DNA to give specific double-stranded fragments with terminal 5'-phosphates.. Its function is as follows. An F and P subtype restriction enzyme that recognizes the double-stranded sequence 5'-GGCCN(5)GGCC-3' and cleaves before N-9. This chain is Type II restriction enzyme SfiI (sfiIR), found in Streptomyces fimbriatus.